A 463-amino-acid chain; its full sequence is Casein kinase 1 (463 aa).

The region spanning 9–278 is the Protein kinase domain; it reads FKLGRKIGSG…LKRLFRDLFI (270 aa). ATP contacts are provided by residues 15–23 and lysine 38; that span reads IGSGSFGEL. Aspartate 128 functions as the Proton acceptor in the catalytic mechanism. The span at 296-306 shows a compositional bias: polar residues; it reads ESNRLRSSGRT. Positions 296-448 are disordered; it reads ESNRLRSSGR…TARNVHDDPT (153 aa). A compositionally biased stretch (basic and acidic residues) spans 315–328; that stretch reads ERTERAAARQDVPD. Polar residues-rich tracts occupy residues 376–396 and 404–440; these read TSSS…SRPS and NRSN…TKTA.

The protein belongs to the protein kinase superfamily. CK1 Ser/Thr protein kinase family. Casein kinase I subfamily. In terms of assembly, monomer. Autophosphorylated. Expressed in leaves, stems, panicles and seeds. Expressed in root tissues and lamina joints.

It localises to the cytoplasm. Its subcellular location is the nucleus. It catalyses the reaction L-seryl-[protein] + ATP = O-phospho-L-seryl-[protein] + ADP + H(+). The enzyme catalyses L-threonyl-[protein] + ATP = O-phospho-L-threonyl-[protein] + ADP + H(+). With respect to regulation, inhibited by N-(2-aminoethyl)-5-chloroisoquinoline-8-sulfonamide (CKI-7). Its function is as follows. Casein kinases are operationally defined by their preferential utilization of acidic proteins such as caseins as substrates. Can phosphorylate casein in vitro. Required for normal root development through modulation of cell elongation. Plants silencing CKI1 show abnormal root development, with reduced number of lateral and adventitious roots, and shortened primary roots as a result of reduced cell elongation. May be involved in abscisic acid (ABA) and brassinosteroid (BR) signaling pathways. Plays an important role in the adaptive growth and fitness under low temperature (LT) conditions. May confer tolerance to LT through an auxin-dependent process. This chain is Casein kinase 1 (CKI1), found in Oryza sativa subsp. japonica (Rice).